The primary structure comprises 385 residues: Glucans biosynthesis protein C (385 aa).

Transmembrane regions (helical) follow at residues 17-39, 54-76, 88-110, 136-158, 179-198, 213-235, 242-261, 276-295, 308-330, and 334-356; these read AWLMLLGIPFHISLIYSSHTWHV, FIHSFRMQVFFVISGYFSYMLFL, VERVGIPMLTAIPLLTLPQFIML, LISHLWFLLVLVVMTTLCVWIFK, LSVIFLCLGIGYAVIRRTIF, IVMQTLFYLPFFILGALAFIFPH, TPSRGCTLAAALAFVAYLLN, SVITMVLGLWMVNVVFSFGH, FVNASLFIYLVHHPLTLFFGAYI, and ITSNWLGFLCGLIFVVGIAIILY.

It belongs to the acyltransferase 3 family. OpgC subfamily.

It localises to the cell membrane. The protein operates within glycan metabolism; osmoregulated periplasmic glucan (OPG) biosynthesis. Necessary for the succinyl substitution of periplasmic glucans. Could catalyze the transfer of succinyl residues from the cytoplasmic side of the membrane to the nascent glucan backbones on the periplasmic side of the membrane. This is Glucans biosynthesis protein C from Escherichia coli O157:H7.